Here is a 334-residue protein sequence, read N- to C-terminus: Type II methyltransferase M.NlaIII (334 aa).

It belongs to the N(4)/N(6)-methyltransferase family.

It catalyses the reaction a 2'-deoxyadenosine in DNA + S-adenosyl-L-methionine = an N(6)-methyl-2'-deoxyadenosine in DNA + S-adenosyl-L-homocysteine + H(+). Functionally, a methylase, recognizes the double-stranded sequence 5'-CATG-3', methylates A-2 on both strands and protects the DNA from cleavage by the NlaIII endonuclease. The polypeptide is Type II methyltransferase M.NlaIII (nlaIIIM) (Neisseria lactamica).